Here is a 454-residue protein sequence, read N- to C-terminus: Probable xylan O-acetyltransferase 9 (454 aa).

Residues 1-15 lie on the Cytoplasmic side of the membrane; the sequence is MKAPPPPSPVAKRAR. Residues 16 to 36 traverse the membrane as a helical; Signal-anchor for type II membrane protein segment; sequence VSPFVFLLVLFLLLFSFLYGE. At 37-454 the chain is on the lumenal side; the sequence is DLKELLGSQA…ELLYTKLFYP (418 aa). Cystine bridges form between Cys-101–Cys-152, Cys-123–Cys-188, Cys-132–Cys-435, and Cys-352–Cys-431. Residues 175-177 carry the GDS motif motif; it reads GDS. The active-site Nucleophile is the Ser-177. N-linked (GlcNAc...) asparagine glycans are attached at residues Asn-219, Asn-293, and Asn-394. The active-site Proton donor is Asp-430. Residues 430–433 carry the DXXH motif motif; the sequence is DCVH. Residue His-433 is the Proton acceptor of the active site.

Belongs to the PC-esterase family. TBL subfamily.

Its subcellular location is the golgi apparatus membrane. In terms of biological role, probable xylan acetyltransferase required for 2-O- and 3-O-monoacetylation of xylosyl residues in xylan. Possesses extremely low activity in vitro. The polypeptide is Probable xylan O-acetyltransferase 9 (Oryza sativa subsp. japonica (Rice)).